The primary structure comprises 102 residues: Small ribosomal subunit protein uS10 (102 aa).

A disordered region spans residues 30–58; sequence TGVNLSGPIPLPTKTLEIPTRKSPDGEGT.

This sequence belongs to the universal ribosomal protein uS10 family. In terms of assembly, part of the 30S ribosomal subunit.

Functionally, involved in the binding of tRNA to the ribosomes. The polypeptide is Small ribosomal subunit protein uS10 (Haloquadratum walsbyi (strain DSM 16790 / HBSQ001)).